A 289-amino-acid chain; its full sequence is N-acetylmuramoyl-L-alanine amidase AmiA (289 aa).

Positions 1–34 form a signal peptide, tat-type signal; the sequence is MSTFKLLKTLTSRRQVLKTGLAALTLSGMSHAVA. The interval 36–61 is disordered; sequence EETLKTSNGHSKPKTKKTGSKRLVML. Residues 46–55 are compositionally biased toward basic residues; sequence SKPKTKKTGS. Residues 59 to 273 enclose the MurNAc-LAA domain; that stretch reads VMLDPGHGGI…IATAIANGII (215 aa).

The protein belongs to the N-acetylmuramoyl-L-alanine amidase 3 family. In terms of processing, predicted to be exported by the Tat system. The position of the signal peptide cleavage has not been experimentally proven.

It localises to the periplasm. The catalysed reaction is Hydrolyzes the link between N-acetylmuramoyl residues and L-amino acid residues in certain cell-wall glycopeptides.. Functionally, cell-wall hydrolase involved in septum cleavage during cell division. The polypeptide is N-acetylmuramoyl-L-alanine amidase AmiA (amiA) (Salmonella typhimurium (strain LT2 / SGSC1412 / ATCC 700720)).